A 143-amino-acid polypeptide reads, in one-letter code: Ribosome-binding factor A (143 aa).

The tract at residues 1-20 is disordered; the sequence is MRFMGKNKFHTGPGPSQRQL.

The protein belongs to the RbfA family. In terms of assembly, monomer. Binds 30S ribosomal subunits, but not 50S ribosomal subunits or 70S ribosomes.

Its subcellular location is the cytoplasm. One of several proteins that assist in the late maturation steps of the functional core of the 30S ribosomal subunit. Associates with free 30S ribosomal subunits (but not with 30S subunits that are part of 70S ribosomes or polysomes). Required for efficient processing of 16S rRNA. May interact with the 5'-terminal helix region of 16S rRNA. This chain is Ribosome-binding factor A, found in Roseobacter denitrificans (strain ATCC 33942 / OCh 114) (Erythrobacter sp. (strain OCh 114)).